A 338-amino-acid polypeptide reads, in one-letter code: GTPase Obg (338 aa).

Positions 1-159 constitute an Obg domain; sequence MSFIDEVKIH…RWLRLELKLM (159 aa). The OBG-type G domain maps to 160-331; it reads ADVGLLGMPS…LLDEIARQLW (172 aa). Residues 166 to 173, 191 to 195, 213 to 216, 283 to 286, and 312 to 314 each bind GTP; these read GMPSVGKS, FTTLK, DIPG, NKMD, and SAA. S173 and T193 together coordinate Mg(2+).

This sequence belongs to the TRAFAC class OBG-HflX-like GTPase superfamily. OBG GTPase family. Monomer. Requires Mg(2+) as cofactor.

The protein localises to the cytoplasm. Functionally, an essential GTPase which binds GTP, GDP and possibly (p)ppGpp with moderate affinity, with high nucleotide exchange rates and a fairly low GTP hydrolysis rate. Plays a role in control of the cell cycle, stress response, ribosome biogenesis and in those bacteria that undergo differentiation, in morphogenesis control. In Geotalea daltonii (strain DSM 22248 / JCM 15807 / FRC-32) (Geobacter daltonii), this protein is GTPase Obg.